We begin with the raw amino-acid sequence, 216 residues long: Pyrophosphatase PpaX (216 aa).

D12 functions as the Nucleophile in the catalytic mechanism.

The protein belongs to the HAD-like hydrolase superfamily. PpaX family. It depends on Mg(2+) as a cofactor.

It catalyses the reaction diphosphate + H2O = 2 phosphate + H(+). Functionally, hydrolyzes pyrophosphate formed during P-Ser-HPr dephosphorylation by HPrK/P. Might play a role in controlling the intracellular pyrophosphate pool. This Bacillus velezensis (strain DSM 23117 / BGSC 10A6 / LMG 26770 / FZB42) (Bacillus amyloliquefaciens subsp. plantarum) protein is Pyrophosphatase PpaX.